Here is a 704-residue protein sequence, read N- to C-terminus: Ankyrin repeat and LEM domain-containing protein 1 homolog (704 aa).

The interval 1 to 29 (MPPNGAITTTPRSRMPPTTPSSGKSRPKK) is disordered. Residues 8–22 (TTTPRSRMPPTTPSS) show a composition bias toward low complexity. 2 ANK repeats span residues 28–59 (KKET…NVNA) and 63–93 (DGAT…PMSA). Disordered regions lie at residues 247-293 (NEDV…SQET), 314-358 (NAGL…ANTT), and 381-421 (SKSA…TTVD). Positions 276–288 (RKQRTPVNHHKRS) are enriched in basic residues. Low complexity-rich tracts occupy residues 329–346 (EPAI…TPKT) and 384–405 (AKSS…SFSS). The LEM domain occupies 425–470 (IRKIRRLREGELKSELKKFGISPAGPLDARTRRLYEKKLLIERRKI). A GIY-YIG domain is found at 525–635 (YNAFCYLIMD…AVKLKNLRNK (111 aa)).

In terms of processing, phosphorylated. Phosphorylated during telophase when localized at the midbody.

Its subcellular location is the cytoplasm. The protein localises to the nucleus. It is found in the chromosome. It localises to the midbody. The protein resides in the cytoskeleton. Its subcellular location is the spindle. Its activity is regulated as follows. Inhibited by EDTA. In terms of biological role, endonuclease which, in association with baf-1, plays an essential role during embryogenesis in the DNA repair response following DNA damage probably by ensuring proper chromosome segregation. Also required during postembryonic cell divisions after DNA damage caused by ionizing radiation to ensure normal cell proliferation. Resolves chromatin bridges in late mitosis that result from incomplete DNA replication, defective chromosome condensation or unresolved recombination intermediates. Together with brc-1, contributes to genome integrity by resolving mitotic chromatin bridges that result from incomplete processing of DNA breaks. In parallel to the slx-1/mus-81 pathway, acts in processing early recombination intermediates in meiotic prophase I to prevent illegitimate recombination. Also involved in processing remaining, erroneous recombination intermediates that persist into the second meiotic division. The polypeptide is Ankyrin repeat and LEM domain-containing protein 1 homolog (Caenorhabditis elegans).